The sequence spans 269 residues: Type II iodothyronine deiodinase (269 aa).

Residues 1-9 lie on the Lumenal side of the membrane; sequence MGILSVDLL. A helical; Signal-anchor for type III membrane protein membrane pass occupies residues 10–34; the sequence is ITLQILPVFFSNCLFLALYDSVILL. Topologically, residues 35 to 269 are cytoplasmic; that stretch reads KHVVLLLSRS…KNFSKRUKLD (235 aa). The disordered stretch occupies residues 83 to 103; that stretch reads NSSVVHVSSPEGGDTSGNGAQ. Selenocysteine 133 is an active-site residue. 2 non-standard amino acids (selenocysteine) are found at residues selenocysteine 133 and selenocysteine 266.

The protein belongs to the iodothyronine deiodinase family. As to quaternary structure, predominantly monomer. Can form homodimers but homodimerization is not essential for enzyme activity. Interacts with USP20 and USP33. Interacts with MARCHF6. Post-translationally, ubiquitinated by MARCHF6, leading to its degradation by the proteasome. Deubiquitinated by USP20 and USP33. In terms of tissue distribution, highly expressed in thyroid, mammary and pituitary glands, then in hypothalamus. Low levels detected in diaphragm, heart, kidney and lung.

It is found in the endoplasmic reticulum membrane. It catalyses the reaction 3,3',5-triiodo-L-thyronine + iodide + A + H(+) = L-thyroxine + AH2. It carries out the reaction 3,3'-diiodo-L-thyronine + iodide + A + H(+) = 3,3',5'-triiodo-L-thyronine + AH2. The enzyme catalyses 3'-iodo-L-thyronine + iodide + A + H(+) = 3',5'-diiodo-L-thyronine + AH2. The catalysed reaction is 3,3'-diiodothyronamine + iodide + A + H(+) = 3,3',5'-triiodothyronamine + AH2. It catalyses the reaction 3'-iodothyronamine + iodide + A + H(+) = 3',5'-diiodothyronamine + AH2. In terms of biological role, plays a crucial role in the metabolism of thyroid hormones (TH) and has specific roles in TH activation and inactivation by deiodination. Catalyzes the deiodination of L-thyroxine (T4) to 3,5,3'-triiodothyronine (T3), 3,3',5'-triiodothyronine (rT3) to 3,3'-diiodothyronine (3,3'-T2) and 3',5'-diiodothyronine (3',5'-T2) to 3'-monoiodothyronine (3'-T1) via outer-ring deiodination (ORD). Catalyzes the phenolic ring deiodinations of 3,3',5'-triiodothyronamine and 3',5'- diiodothyronamine. The polypeptide is Type II iodothyronine deiodinase (DIO2) (Bos taurus (Bovine)).